Consider the following 329-residue polypeptide: DNA-directed RNA polymerase subunit alpha (329 aa).

Residues 1-235 (MQGSVTEFLK…EQLEAFVDLR (235 aa)) are alpha N-terminal domain (alpha-NTD). Positions 249 to 329 (FDPILLRPVD…NWPPASIADE (81 aa)) are alpha C-terminal domain (alpha-CTD).

The protein belongs to the RNA polymerase alpha chain family. In terms of assembly, homodimer. The RNAP catalytic core consists of 2 alpha, 1 beta, 1 beta' and 1 omega subunit. When a sigma factor is associated with the core the holoenzyme is formed, which can initiate transcription.

It carries out the reaction RNA(n) + a ribonucleoside 5'-triphosphate = RNA(n+1) + diphosphate. Its function is as follows. DNA-dependent RNA polymerase catalyzes the transcription of DNA into RNA using the four ribonucleoside triphosphates as substrates. The sequence is that of DNA-directed RNA polymerase subunit alpha from Cronobacter sakazakii (strain ATCC BAA-894) (Enterobacter sakazakii).